The chain runs to 178 residues: Twist-related protein (178 aa).

The bHLH domain occupies 20–71 (QQRACANRRERQRTKELNDAFTLLRKLIPSMPSDKMSKIHTLRIATDYISFL).

As to quaternary structure, efficient DNA binding requires dimerization with another bHLH protein. Homodimer. Forms a heterodimer with hlh-2. As to expression, expressed in defecation-associated muscles and neuron-like cells in the head at the L1 stage. In later larvae, expressed in SM cells and their descendants. Not expressed in differentiated body wall or sex muscles.

The protein localises to the nucleus. Acts as a transcriptional regulator. Involved in postembryonic mesodermal cell fate specification. Activates ceh-24 and egl-15 during mesodermal patterning. This Caenorhabditis elegans protein is Twist-related protein (hlh-8).